The primary structure comprises 251 residues: MAVHLLIVDALNLIRRIHAVQGSPCVETCQHALDQLIMHSQPTHVVAVFDDENRNSGWRHQRLPDYKAGRPPMPDELHNEMPTLRAAFEQRGVPCWSATGNEADDLAATLAVKVTQAGHQATIVSTDKGYCQLLSPTLRIRDYFQKRWLDAPFIDKEFGVQPQQLPDYWGLAGISSSKVPGVAGIGPKSATQLLVEFQSLEGIYENLDAVAEKWRKKLEMHKEMAFLCRDIARLQTDVHIDGNLQQLRLKR.

Residue Asp-104 participates in Mg(2+) binding. The 5'-3' exonuclease domain occupies 160-250 (VQPQQLPDYW…DGNLQQLRLK (91 aa)). K(+) is bound by residues Leu-171, Ala-172, Pro-180, Val-182, and Ile-185. Residues 184–189 (GIGPKS) form an interaction with DNA region.

The protein belongs to the Xni family. It depends on Mg(2+) as a cofactor. The cofactor is K(+).

In terms of biological role, has flap endonuclease activity. During DNA replication, flap endonucleases cleave the 5'-overhanging flap structure that is generated by displacement synthesis when DNA polymerase encounters the 5'-end of a downstream Okazaki fragment. The sequence is that of Flap endonuclease Xni from Escherichia fergusonii (strain ATCC 35469 / DSM 13698 / CCUG 18766 / IAM 14443 / JCM 21226 / LMG 7866 / NBRC 102419 / NCTC 12128 / CDC 0568-73).